The primary structure comprises 547 residues: 2-succinyl-5-enolpyruvyl-6-hydroxy-3-cyclohexene-1-carboxylate synthase (547 aa).

Belongs to the TPP enzyme family. MenD subfamily. As to quaternary structure, homodimer. The cofactor is Mg(2+). It depends on Mn(2+) as a cofactor. Thiamine diphosphate serves as cofactor.

The enzyme catalyses isochorismate + 2-oxoglutarate + H(+) = 5-enolpyruvoyl-6-hydroxy-2-succinyl-cyclohex-3-ene-1-carboxylate + CO2. Its pathway is quinol/quinone metabolism; 1,4-dihydroxy-2-naphthoate biosynthesis; 1,4-dihydroxy-2-naphthoate from chorismate: step 2/7. It participates in quinol/quinone metabolism; menaquinone biosynthesis. Its function is as follows. Catalyzes the thiamine diphosphate-dependent decarboxylation of 2-oxoglutarate and the subsequent addition of the resulting succinic semialdehyde-thiamine pyrophosphate anion to isochorismate to yield 2-succinyl-5-enolpyruvyl-6-hydroxy-3-cyclohexene-1-carboxylate (SEPHCHC). The protein is 2-succinyl-5-enolpyruvyl-6-hydroxy-3-cyclohexene-1-carboxylate synthase of Mycobacterium sp. (strain JLS).